The sequence spans 212 residues: Imidazole glycerol phosphate synthase subunit HisH (212 aa).

The Glutamine amidotransferase type-1 domain occupies 3 to 212 (TVAVIDYGMG…QNFIAWDGRW (210 aa)). Cys81 acts as the Nucleophile in catalysis. Residues His190 and Glu192 contribute to the active site.

In terms of assembly, heterodimer of HisH and HisF.

The protein resides in the cytoplasm. It carries out the reaction 5-[(5-phospho-1-deoxy-D-ribulos-1-ylimino)methylamino]-1-(5-phospho-beta-D-ribosyl)imidazole-4-carboxamide + L-glutamine = D-erythro-1-(imidazol-4-yl)glycerol 3-phosphate + 5-amino-1-(5-phospho-beta-D-ribosyl)imidazole-4-carboxamide + L-glutamate + H(+). The catalysed reaction is L-glutamine + H2O = L-glutamate + NH4(+). Its pathway is amino-acid biosynthesis; L-histidine biosynthesis; L-histidine from 5-phospho-alpha-D-ribose 1-diphosphate: step 5/9. Its function is as follows. IGPS catalyzes the conversion of PRFAR and glutamine to IGP, AICAR and glutamate. The HisH subunit catalyzes the hydrolysis of glutamine to glutamate and ammonia as part of the synthesis of IGP and AICAR. The resulting ammonia molecule is channeled to the active site of HisF. The chain is Imidazole glycerol phosphate synthase subunit HisH from Pseudomonas putida (strain ATCC 47054 / DSM 6125 / CFBP 8728 / NCIMB 11950 / KT2440).